A 314-amino-acid chain; its full sequence is MTNPLNSTAANRSNQPSSDGISDGQITNEEAESLINKKNCSGHKLKEVTDSDTFSDNGKDDSDTKKRFHYHQDQRRMSLTSIVAVESPSSSNAPSRKTIDLGHGSDLIYIQRFLPFQQSWTFFDYLDKHIPWTRPTIRVFGRSCLQPRDTCYVASSGLTALVYSGYRPTSYSWDDFPPLKEILDAIYKVLPGSRFNSLLLNRYKGASDYVAWHADDEKIYGPTPEIASVSFGCERDFVLKKKKDEESSQGKTGDSGPAKKRLKRSSREDQQSLTLKHGSLLVMRGYTQRDWIHSVPKRAKAEGTRINLTFRLVL.

The span at 1-28 (MTNPLNSTAANRSNQPSSDGISDGQITN) shows a compositional bias: polar residues. The disordered stretch occupies residues 1–75 (MTNPLNSTAA…KRFHYHQDQR (75 aa)). The span at 57–75 (NGKDDSDTKKRFHYHQDQR) shows a compositional bias: basic and acidic residues. Residues W132 and 160-163 (ALVY) contribute to the substrate site. One can recognise a Fe2OG dioxygenase domain in the interval 194 to 314 (RFNSLLLNRY…RINLTFRLVL (121 aa)). Position 201 to 203 (201 to 203 (NRY)) interacts with 2-oxoglutarate. Residues H213 and D215 each contribute to the Fe cation site. D216 lines the substrate pocket. A disordered region spans residues 242-271 (KKDEESSQGKTGDSGPAKKRLKRSSREDQQ). H293 is a binding site for Fe cation. 2-oxoglutarate is bound by residues R305 and 305 to 311 (RINLTFR).

The protein belongs to the alkB family. The cofactor is Fe(2+). In terms of tissue distribution, expressed ubiquitously, including in seedlings, leaves and flowers.

The protein resides in the nucleus. It carries out the reaction a methylated nucleobase within DNA + 2-oxoglutarate + O2 = a nucleobase within DNA + formaldehyde + succinate + CO2. In terms of biological role, dioxygenase that repairs alkylated DNA containing 1-methyladenine and 1-ethenoadenine by oxidative demethylation. Accepts double-stranded and single-stranded substrates, with a preference for dsDNA over ssDNA. Confers resistance to methylating agents such as methylmethanesulphonate (MMS). This Arabidopsis thaliana (Mouse-ear cress) protein is DNA oxidative demethylase ALKBH2 (ALKBH2).